The chain runs to 253 residues: Testis-expressed protein 47 (253 aa).

This is Testis-expressed protein 47 (Tex47) from Mus musculus (Mouse).